We begin with the raw amino-acid sequence, 153 residues long: UPF0756 membrane protein lmo1568 (153 aa).

4 helical membrane passes run 6–26 (MLFL…SLII), 54–74 (WGVT…QIGF), 80–100 (SFKS…SILA), and 117–137 (LVFG…GPVI).

It belongs to the UPF0756 family.

It localises to the cell membrane. This Listeria monocytogenes serovar 1/2a (strain ATCC BAA-679 / EGD-e) protein is UPF0756 membrane protein lmo1568.